The following is a 156-amino-acid chain: Ribosomal RNA large subunit methyltransferase H (156 aa).

Residues Gly104 and Leu123–Met128 contribute to the S-adenosyl-L-methionine site.

This sequence belongs to the RNA methyltransferase RlmH family. In terms of assembly, homodimer.

The protein resides in the cytoplasm. The catalysed reaction is pseudouridine(1915) in 23S rRNA + S-adenosyl-L-methionine = N(3)-methylpseudouridine(1915) in 23S rRNA + S-adenosyl-L-homocysteine + H(+). Functionally, specifically methylates the pseudouridine at position 1915 (m3Psi1915) in 23S rRNA. This Bdellovibrio bacteriovorus (strain ATCC 15356 / DSM 50701 / NCIMB 9529 / HD100) protein is Ribosomal RNA large subunit methyltransferase H.